The sequence spans 140 residues: Ribosomal RNA large subunit methyltransferase H (140 aa).

S-adenosyl-L-methionine contacts are provided by leucine 55 and glycine 87.

Belongs to the RNA methyltransferase RlmH family. In terms of assembly, homodimer.

The protein resides in the cytoplasm. It catalyses the reaction pseudouridine(1915) in 23S rRNA + S-adenosyl-L-methionine = N(3)-methylpseudouridine(1915) in 23S rRNA + S-adenosyl-L-homocysteine + H(+). Its function is as follows. Specifically methylates the pseudouridine at position 1915 (m3Psi1915) in 23S rRNA. The chain is Ribosomal RNA large subunit methyltransferase H from Erythrobacter litoralis (strain HTCC2594).